The following is a 404-amino-acid chain: GTPase Obg (404 aa).

In terms of domain architecture, Obg spans 1 to 159 (MKFIDEARIE…RALRLELKVL (159 aa)). The segment at 22–43 (SFRREKFIPRGGPDGGDGGRGG) is disordered. Positions 33–43 (GPDGGDGGRGG) are enriched in gly residues. An OBG-type G domain is found at 160–334 (ADVGLLGMPN…LVFAIQDFLD (175 aa)). GTP contacts are provided by residues 166 to 173 (GMPNAGKS), 191 to 195 (FTTLA), 213 to 216 (DIPG), 284 to 287 (NKLD), and 315 to 317 (SAL). 2 residues coordinate Mg(2+): S173 and T193. Residues 373–404 (LLAEGETGTGDDGRDGNENDPADEQDTNRPNH) are disordered.

The protein belongs to the TRAFAC class OBG-HflX-like GTPase superfamily. OBG GTPase family. Monomer. The cofactor is Mg(2+).

It localises to the cytoplasm. An essential GTPase which binds GTP, GDP and possibly (p)ppGpp with moderate affinity, with high nucleotide exchange rates and a fairly low GTP hydrolysis rate. Plays a role in control of the cell cycle, stress response, ribosome biogenesis and in those bacteria that undergo differentiation, in morphogenesis control. In Aromatoleum aromaticum (strain DSM 19018 / LMG 30748 / EbN1) (Azoarcus sp. (strain EbN1)), this protein is GTPase Obg.